The chain runs to 417 residues: Gamma-glutamyl phosphate reductase (417 aa).

The protein belongs to the gamma-glutamyl phosphate reductase family.

It is found in the cytoplasm. The enzyme catalyses L-glutamate 5-semialdehyde + phosphate + NADP(+) = L-glutamyl 5-phosphate + NADPH + H(+). It functions in the pathway amino-acid biosynthesis; L-proline biosynthesis; L-glutamate 5-semialdehyde from L-glutamate: step 2/2. Functionally, catalyzes the NADPH-dependent reduction of L-glutamate 5-phosphate into L-glutamate 5-semialdehyde and phosphate. The product spontaneously undergoes cyclization to form 1-pyrroline-5-carboxylate. The sequence is that of Gamma-glutamyl phosphate reductase from Escherichia fergusonii (strain ATCC 35469 / DSM 13698 / CCUG 18766 / IAM 14443 / JCM 21226 / LMG 7866 / NBRC 102419 / NCTC 12128 / CDC 0568-73).